The sequence spans 338 residues: Phenylalanine--tRNA ligase alpha subunit (338 aa).

Residue Glu-252 participates in Mg(2+) binding.

This sequence belongs to the class-II aminoacyl-tRNA synthetase family. Phe-tRNA synthetase alpha subunit type 1 subfamily. As to quaternary structure, tetramer of two alpha and two beta subunits. The cofactor is Mg(2+).

The protein resides in the cytoplasm. It catalyses the reaction tRNA(Phe) + L-phenylalanine + ATP = L-phenylalanyl-tRNA(Phe) + AMP + diphosphate + H(+). This Pseudomonas fluorescens (strain Pf0-1) protein is Phenylalanine--tRNA ligase alpha subunit.